A 445-amino-acid polypeptide reads, in one-letter code: Cholesterol side-chain cleavage enzyme, mitochondrial (445 aa).

The N-terminal 36 residues, 1–36 (RGLPSRSVFLRGCQASLSTAQERLGHPGVPTREGVR), are a transit peptide targeting the mitochondrion.

This sequence belongs to the cytochrome P450 family. Interacts with FDX1/adrenodoxin. Heme serves as cofactor.

It is found in the mitochondrion inner membrane. It carries out the reaction 6 reduced [adrenodoxin] + cholesterol + 3 O2 + 6 H(+) = 4-methylpentanal + pregnenolone + 6 oxidized [adrenodoxin] + 4 H2O. It catalyses the reaction 2 reduced [adrenodoxin] + cholesterol + O2 + 2 H(+) = (22R)-hydroxycholesterol + 2 oxidized [adrenodoxin] + H2O. The enzyme catalyses (22R)-hydroxycholesterol + 2 reduced [adrenodoxin] + O2 + 2 H(+) = (20R,22R)-20,22-dihydroxycholesterol + 2 oxidized [adrenodoxin] + H2O. The catalysed reaction is (20R,22R)-20,22-dihydroxycholesterol + 2 reduced [adrenodoxin] + O2 + 2 H(+) = 4-methylpentanal + pregnenolone + 2 oxidized [adrenodoxin] + 2 H2O. The protein operates within lipid metabolism; C21-steroid hormone metabolism. Its pathway is steroid metabolism; cholesterol metabolism. Functionally, a cytochrome P450 monooxygenase that catalyzes the side-chain hydroxylation and cleavage of cholesterol to pregnenolone, the precursor of most steroid hormones. Catalyzes three sequential oxidation reactions of cholesterol, namely the hydroxylation at C22 followed with the hydroxylation at C20 to yield 20R,22R-hydroxycholesterol that is further cleaved between C20 and C22 to yield the C21-steroid pregnenolone and 4-methylpentanal. Mechanistically, uses molecular oxygen inserting one oxygen atom into a substrate and reducing the second into a water molecule. Two electrons are provided by NADPH via a two-protein mitochondrial transfer system comprising flavoprotein FDXR (adrenodoxin/ferredoxin reductase) and nonheme iron-sulfur protein FDX1 or FDX2 (adrenodoxin/ferredoxin). The sequence is that of Cholesterol side-chain cleavage enzyme, mitochondrial (CYP11A1) from Oryctolagus cuniculus (Rabbit).